The primary structure comprises 808 residues: Probable mannosyl-oligosaccharide glucosidase (808 aa).

At 1–11 (MVSDMLGGNKR) the chain is on the cytoplasmic side. The helical; Signal-anchor for type II membrane protein transmembrane segment at 12-31 (WILFGLLSFLLNCVLVSCSV) threads the bilayer. The Lumenal portion of the chain corresponds to 32–808 (EDIEKAANDS…LVVNIMSENY (777 aa)). N-linked (GlcNAc...) asparagine glycosylation is present at N39. The active-site Proton donor is D580. Residue E778 is the Proton acceptor of the active site.

The protein belongs to the glycosyl hydrolase 63 family.

It is found in the endoplasmic reticulum membrane. It carries out the reaction N(4)-(alpha-D-Glc-(1-&gt;2)-alpha-D-Glc-(1-&gt;3)-alpha-D-Glc-(1-&gt;3)-alpha-D-Man-(1-&gt;2)-alpha-D-Man-(1-&gt;2)-alpha-D-Man-(1-&gt;3)-[alpha-D-Man-(1-&gt;2)-alpha-D-Man-(1-&gt;3)-[alpha-D-Man-(1-&gt;2)-alpha-D-Man-(1-&gt;6)]-alpha-D-Man-(1-&gt;6)]-beta-D-Man-(1-&gt;4)-beta-D-GlcNAc-(1-&gt;4)-beta-D-GlcNAc)-L-asparaginyl-[protein] + H2O = N(4)-(alpha-D-Glc-(1-&gt;3)-alpha-D-Glc-(1-&gt;3)-alpha-D-Man-(1-&gt;2)-alpha-D-Man-(1-&gt;2)-alpha-D-Man-(1-&gt;3)-[alpha-D-Man-(1-&gt;2)-alpha-D-Man-(1-&gt;3)-[alpha-D-Man-(1-&gt;2)-alpha-D-Man-(1-&gt;6)]-alpha-D-Man-(1-&gt;6)]-beta-D-Man-(1-&gt;4)-beta-D-GlcNAc-(1-&gt;4)-beta-D-GlcNAc)-L-asparaginyl-[protein] + beta-D-glucose. Functionally, cleaves the distal alpha 1,2-linked glucose residue from the Glc(3)Man(9)GlcNAc(2) oligosaccharide precursor highly specifically. This is Probable mannosyl-oligosaccharide glucosidase from Schizosaccharomyces pombe (strain 972 / ATCC 24843) (Fission yeast).